The following is a 149-amino-acid chain: Calmodulin (149 aa).

The residue at position 2 (alanine 2) is an N-acetylalanine. 4 consecutive EF-hand domains span residues 8–43 (EQIA…LGQN), 44–79 (PTEA…KMKD), 81–116 (DTEE…LGEK), and 117–149 (LTDE…MMAK). Residues aspartate 21, aspartate 23, aspartate 25, threonine 27, glutamate 32, aspartate 57, aspartate 59, asparagine 61, threonine 63, glutamate 68, aspartate 94, aspartate 96, asparagine 98, and glutamate 105 each contribute to the Ca(2+) site. Lysine 116 is modified (N6,N6,N6-trimethyllysine). Ca(2+) contacts are provided by aspartate 130, aspartate 132, aspartate 134, glutamine 136, and glutamate 141.

This sequence belongs to the calmodulin family.

Its function is as follows. Calmodulin mediates the control of a large number of enzymes, ion channels and other proteins by Ca(2+). Among the enzymes to be stimulated by the calmodulin-Ca(2+) complex are a number of protein kinases and phosphatases. In Heterocapsa triquetra (Dinoflagellate), this protein is Calmodulin.